We begin with the raw amino-acid sequence, 578 residues long: Vacuolar protein 8 (578 aa).

ARM repeat units lie at residues 58-95 (NRAE…FAEI), 96-135 (TERD…NLAV), 137-176 (ADNK…NLAT), 178-217 (EDNK…NMTH), 219-258 (DDNR…NIAV), 262-301 (NRKR…NLAS), 303-342 (EKYQ…NISI), 344-384 (PLNE…NLAA), and 428-467 (DELK…NLSS).

It belongs to the beta-catenin family.

It is found in the vacuole membrane. Functionally, functions in both vacuole inheritance and protein targeting from the cytoplasm to vacuole. In Aspergillus oryzae (strain ATCC 42149 / RIB 40) (Yellow koji mold), this protein is Vacuolar protein 8 (vac8).